The primary structure comprises 255 residues: Hemin import ATP-binding protein HmuV (255 aa).

One can recognise an ABC transporter domain in the interval 2–238 (LDVEGLHLKR…AALNAVFGID (237 aa)). 34 to 41 (GPNGAGKS) serves as a coordination point for ATP.

This sequence belongs to the ABC transporter superfamily. Heme (hemin) importer (TC 3.A.1.14.5) family. As to quaternary structure, the complex is composed of two ATP-binding proteins (HmuV), two transmembrane proteins (HmuU) and a solute-binding protein (HmuT).

It is found in the cell inner membrane. Its function is as follows. Part of the ABC transporter complex HmuTUV involved in hemin import. Responsible for energy coupling to the transport system. The sequence is that of Hemin import ATP-binding protein HmuV from Pseudomonas entomophila (strain L48).